Here is a 396-residue protein sequence, read N- to C-terminus: Gap junction gamma-1 protein (396 aa).

Residues 1–22 lie on the Cytoplasmic side of the membrane; it reads MSWSFLTRLLEEIHNHSTFVGK. Residues 23–45 form a helical membrane-spanning segment; that stretch reads IWLTVLIVFRIVLTAVGGESIYY. Topologically, residues 46-75 are extracellular; it reads DEQSKFVCNTEQPGCENVCYDAFAPLSHVR. A helical transmembrane segment spans residues 76–95; the sequence is FWVFQIILVATPSVMYLGYA. Topologically, residues 96–175 are cytoplasmic; it reads IHKIAKMEHG…RRIREDGLMK (80 aa). Positions 145–165 are disordered; sequence ELESEKENKEQNQSKPKHDGR. Over residues 147–156 the composition is skewed to basic and acidic residues; that stretch reads ESEKENKEQN. Residues 176-198 form a helical membrane-spanning segment; it reads IYVLQLLARTMFEVGFLIGQYFL. Over 199–228 the chain is Extracellular; the sequence is YGFQVHPFYVCSRVPCPHKIDCFISRPTEK. A helical membrane pass occupies residues 229 to 248; that stretch reads TIFLLIMYGVTGLCLLLNIW. Over 249 to 396 the chain is Cytoplasmic; the sequence is EMLHLGFGTI…SGDGKTSVWI (148 aa). Positions 357 to 396 are disordered; sequence NHQNNPHGPREKKAKVGSKAGSNKSSASSKSGDGKTSVWI. The segment covering 373 to 396 has biased composition (low complexity); it reads GSKAGSNKSSASSKSGDGKTSVWI.

The protein belongs to the connexin family. Gamma-type subfamily. As to quaternary structure, a connexon is composed of a hexamer of connexins. Interacts with CNST.

Its subcellular location is the cell membrane. The protein resides in the cell junction. It localises to the gap junction. In terms of biological role, one gap junction consists of a cluster of closely packed pairs of transmembrane channels, the connexons, through which materials of low MW diffuse from one cell to a neighboring cell. In Sus scrofa (Pig), this protein is Gap junction gamma-1 protein (GJC1).